Reading from the N-terminus, the 286-residue chain is Translocon-associated protein subunit alpha (286 aa).

Positions 1–23 (MRVLPRLLLLLLLAFPAAVLLRG) are cleaved as a signal peptide. Over 24 to 207 (GPGGSLVAAQ…EREDGLDGET (184 aa)) the chain is Lumenal. Positions 37-75 (EDEETVEDSIIEDEDDEAEVEEDEPTDLAEDKEEEDVSG) are enriched in acidic residues. The segment at 37-83 (EDEETVEDSIIEDEDDEAEVEEDEPTDLAEDKEEEDVSGEPEASPSA) is disordered. N-linked (GlcNAc...) asparagine glycans are attached at residues N136 and N191. The chain crosses the membrane as a helical span at residues 208–228 (IFMYMFLAGLGLLVVVGLHQL). At 229 to 286 (LESRKRKRPIQKVEMGTSSQNDVDMSWIPQETLNQINKASPRRLPRKRAQKRSVGSDE) the chain is on the cytoplasmic side. S247 carries the phosphoserine modification. T260 carries the post-translational modification Phosphothreonine. The disordered stretch occupies residues 261 to 286 (LNQINKASPRRLPRKRAQKRSVGSDE). Position 268 is a phosphoserine (S268). Basic residues predominate over residues 268-279 (SPRRLPRKRAQK).

This sequence belongs to the TRAP-alpha family. Heterotetramer of TRAP-alpha, TRAP-beta, TRAP-delta and TRAP-gamma. Interacts with palmitoylated calnexin (CALX), the interaction is required for efficient folding of glycosylated proteins. Post-translationally, phosphorylated in its cytoplasmic tail.

The protein resides in the endoplasmic reticulum membrane. Functionally, TRAP proteins are part of a complex whose function is to bind calcium to the ER membrane and thereby regulate the retention of ER resident proteins. May be involved in the recycling of the translocation apparatus after completion of the translocation process or may function as a membrane-bound chaperone facilitating folding of translocated proteins. This is Translocon-associated protein subunit alpha (SSR1) from Canis lupus familiaris (Dog).